We begin with the raw amino-acid sequence, 628 residues long: DNA-directed RNA polymerase subunit beta' (628 aa).

Positions 70, 72, 85, and 88 each coordinate Zn(2+). 3 residues coordinate Mg(2+): Asp472, Asp474, and Asp476.

It belongs to the RNA polymerase beta' chain family. RpoC1 subfamily. In terms of assembly, in plastids the minimal PEP RNA polymerase catalytic core is composed of four subunits: alpha, beta, beta', and beta''. When a (nuclear-encoded) sigma factor is associated with the core the holoenzyme is formed, which can initiate transcription. The cofactor is Mg(2+). It depends on Zn(2+) as a cofactor.

It localises to the plastid. It is found in the chloroplast. It carries out the reaction RNA(n) + a ribonucleoside 5'-triphosphate = RNA(n+1) + diphosphate. Its function is as follows. DNA-dependent RNA polymerase catalyzes the transcription of DNA into RNA using the four ribonucleoside triphosphates as substrates. This chain is DNA-directed RNA polymerase subunit beta', found in Gracilaria tenuistipitata var. liui (Red alga).